Here is a 239-residue protein sequence, read N- to C-terminus: uncharacterized protein (239 aa).

This is an uncharacterized protein from Edwardsiella ictaluri (strain 93-146).